An 824-amino-acid polypeptide reads, in one-letter code: MNRRGGQTAFAAIARNERAIAAFIPYSSHLTDTTLITHGADLVRTWRVQGIAFESAEPELVSQRHEQLNGLWRAISCEQVALWIHCIRRKTQAGLDARYENPFCRALDASYNARLNARQAMTNEFYLTLVYRPGHAALGKRAHHGQAEVRRQLLAHVRRMDEIGSLIETTLRSHGENHEQAITVLGCETDSAGRRYSRTLTLLEFLLTGHWQPVRVPAGPVDAYLGSSRILAGAEMMELRAPTCRRYAQFIDFKEYGTHTEPGMLNALLYEDYEYVITHSFSAVGKRQALAYLQRQRAQLANVQDAAYSQIDDLAHAEDALVNGDFVIGEYHFSMMILGADPRQLRRDVSSAMTRIQERGFLATPVTLALDAAFYAQLPANWAYRSRKAMLTSRNFAGLCSFHNFYGGKRDGNPWGPALSLLSTPSGQPFYFNFHHSGLDEDCRGQMMLGNTRIIGQSGSGKTVLLNFLLCQLQKFRSADADGLTTIFFDKDRGAEICIRALDGQYLRIRDGEPTGFNPLQLPCTDRNVMFLDSLLAMLARAHDSPLTSAQHATLATAVRTVLRMPASLRRMSTLLQNITQATSEQRELVRRLGRWCRDDGAGGTGMLWWVFDNPNDCLDFSRPGNYGIDGTAFLDNAETRTPISMYLLHRMNEAMDGRRFVYLMDEAWKWIDDPAFAEFAGDQQLTIRKKNGLGVFSTQMPSSLLGARVAASLVQQCATEIYLPNPRADRAEYLDGFKCTETEYQLIRSMAEDSHLFLVKQGRQAVVAQLDLSGMDDELAILSGNARNLRCFEQALALTRERDPNDWIAVFHRLRREASAGLR.

456–463 (GQSGSGKT) serves as a coordination point for ATP.

The protein belongs to the TrbE/VirB4 family.

The protein resides in the cell membrane. In terms of biological role, component of the type IV secretion system ptl essential for secretion of assembled pertussis toxin (PTX) through the outer membrane. The protein is Type IV secretion system protein PtlC (ptlC) of Bordetella pertussis (strain Tohama I / ATCC BAA-589 / NCTC 13251).